The chain runs to 493 residues: Leucine-rich repeat-containing protein 14 (493 aa).

One copy of the LRR 1; degenerate repeat lies at 111–146; the sequence is KHTLRVLDMTGLLDDGVEQDPGTMSMWDCTAAVART. One copy of the LRR 2; degenerate repeat lies at 194–218; the sequence is RLCCRDLRAEDLPMRNTVALLQLLD. The stretch at 219–246 is one LRR 3; degenerate repeat; it reads AGCLRRVDLRFNNLGLRGLSVIIPHVAR. Residues 247 to 282 form an LRR 4; degenerate repeat; the sequence is FQHLASLRLHYVHGDSRQPSVDGEDNFRYFLAQMGR. LRR repeat units follow at residues 283-307, 308-339, 340-360, 364-391, and 392-416; these read FTCL…LSTL, QSPL…VHLK, KLDL…QGLL, AATL…VLTR, and CASL…LLRD.

This sequence belongs to the PRAME family. LRRC14 subfamily. As to quaternary structure, interacts with IKBKB; disrupts IKBKB-IKBKG interaction preventing I-kappa-B-kinase (IKK) core complex formation and leading to a decrease of IKBKB phosphorylation and NF-kappaB activation. Interacts with CHUK.

It localises to the cytoplasm. Its function is as follows. Negatively regulates Toll-like receptor-mediated NF-kappa-B signaling by disrupting IKK core complex formation through interaction with IKBKB. The chain is Leucine-rich repeat-containing protein 14 from Bos taurus (Bovine).